The following is a 505-amino-acid chain: Maturase K (505 aa).

This sequence belongs to the intron maturase 2 family. MatK subfamily.

The protein localises to the plastid. It is found in the chloroplast. Functionally, usually encoded in the trnK tRNA gene intron. Probably assists in splicing its own and other chloroplast group II introns. The sequence is that of Maturase K from Spinacia oleracea (Spinach).